Here is a 512-residue protein sequence, read N- to C-terminus: 2-isopropylmalate synthase (512 aa).

Residues 5-268 form the Pyruvate carboxyltransferase domain; sequence LIIFDTTLRD…DIGIDTQQIL (264 aa). D14, H202, H204, and N239 together coordinate Mn(2+). The tract at residues 394-512 is regulatory domain; it reads GFVSLSQHSE…SKADRVAAQG (119 aa).

It belongs to the alpha-IPM synthase/homocitrate synthase family. LeuA type 1 subfamily. Homodimer. Mn(2+) serves as cofactor.

The protein localises to the cytoplasm. The enzyme catalyses 3-methyl-2-oxobutanoate + acetyl-CoA + H2O = (2S)-2-isopropylmalate + CoA + H(+). The protein operates within amino-acid biosynthesis; L-leucine biosynthesis; L-leucine from 3-methyl-2-oxobutanoate: step 1/4. Its function is as follows. Catalyzes the condensation of the acetyl group of acetyl-CoA with 3-methyl-2-oxobutanoate (2-ketoisovalerate) to form 3-carboxy-3-hydroxy-4-methylpentanoate (2-isopropylmalate). The protein is 2-isopropylmalate synthase of Polaromonas naphthalenivorans (strain CJ2).